We begin with the raw amino-acid sequence, 155 residues long: MKVIEGAIVAPNAKVAIVIARFNSFINESLLSGALDTLKRQGQVSYDNITIIRCPGAYELPLVAQLTAKSDRYDAIIALGSVIRGGTHFEYVASECNKGLAQVALDYNIPVAFGVLTVDYLEQAIERAGTKAGNKGAEAALMLLEMVNILAQVES.

5-amino-6-(D-ribitylamino)uracil contacts are provided by residues Phe-22, 57–59, and 81–83; these read AYE and SVI. 86–87 contacts (2S)-2-hydroxy-3-oxobutyl phosphate; that stretch reads GT. Catalysis depends on His-88, which acts as the Proton donor. Residue Phe-113 coordinates 5-amino-6-(D-ribitylamino)uracil. Arg-127 is a (2S)-2-hydroxy-3-oxobutyl phosphate binding site.

It belongs to the DMRL synthase family. As to quaternary structure, forms an icosahedral capsid composed of 60 subunits, arranged as a dodecamer of pentamers.

The catalysed reaction is (2S)-2-hydroxy-3-oxobutyl phosphate + 5-amino-6-(D-ribitylamino)uracil = 6,7-dimethyl-8-(1-D-ribityl)lumazine + phosphate + 2 H2O + H(+). Its pathway is cofactor biosynthesis; riboflavin biosynthesis; riboflavin from 2-hydroxy-3-oxobutyl phosphate and 5-amino-6-(D-ribitylamino)uracil: step 1/2. Catalyzes the formation of 6,7-dimethyl-8-ribityllumazine by condensation of 5-amino-6-(D-ribitylamino)uracil with 3,4-dihydroxy-2-butanone 4-phosphate. This is the penultimate step in the biosynthesis of riboflavin. In Photobacterium phosphoreum, this protein is 6,7-dimethyl-8-ribityllumazine synthase.